The sequence spans 191 residues: Molybdenum cofactor guanylyltransferase (191 aa).

GTP contacts are provided by residues 13–15 (LAG), Lys-26, Asp-72, and Asp-102. Asp-102 is a Mg(2+) binding site.

Belongs to the MobA family. Monomer. Requires Mg(2+) as cofactor.

It is found in the cytoplasm. The catalysed reaction is Mo-molybdopterin + GTP + H(+) = Mo-molybdopterin guanine dinucleotide + diphosphate. Its function is as follows. Transfers a GMP moiety from GTP to Mo-molybdopterin (Mo-MPT) cofactor (Moco or molybdenum cofactor) to form Mo-molybdopterin guanine dinucleotide (Mo-MGD) cofactor. The sequence is that of Molybdenum cofactor guanylyltransferase from Pseudomonas putida (strain ATCC 700007 / DSM 6899 / JCM 31910 / BCRC 17059 / LMG 24140 / F1).